A 241-amino-acid chain; its full sequence is Uracil-DNA glycosylase (241 aa).

The active-site Proton acceptor is the Asp-71. The interval 221–241 (ISPIDWSLPPRNELDTTSAGA) is disordered.

The protein belongs to the uracil-DNA glycosylase (UDG) superfamily. UNG family.

It localises to the cytoplasm. It carries out the reaction Hydrolyzes single-stranded DNA or mismatched double-stranded DNA and polynucleotides, releasing free uracil.. Its function is as follows. Excises uracil residues from the DNA which can arise as a result of misincorporation of dUMP residues by DNA polymerase or due to deamination of cytosine. The sequence is that of Uracil-DNA glycosylase from Xanthomonas oryzae pv. oryzae (strain MAFF 311018).